Here is a 70-residue protein sequence, read N- to C-terminus: Small ribosomal subunit protein bS21 (70 aa).

It belongs to the bacterial ribosomal protein bS21 family.

The protein is Small ribosomal subunit protein bS21 of Laribacter hongkongensis (strain HLHK9).